We begin with the raw amino-acid sequence, 92 residues long: uncharacterized protein (92 aa).

The interval 1–92 (MSDAAAPAQA…PSPSQQQVAA (92 aa)) is disordered.

This is an uncharacterized protein from Caenorhabditis elegans.